A 232-amino-acid chain; its full sequence is Ras-related protein RabP (232 aa).

15 to 22 (GNYGVGKS) is a GTP binding site. Positions 35–40 (DNTTGF) match the Effector region motif. Residues 58–62 (DTSGQ) and 118–121 (NKFD) each bind GTP. S-geranylgeranyl cysteine attachment occurs at residues C229 and C230.

Belongs to the small GTPase superfamily. Rab family.

The protein resides in the cell membrane. This chain is Ras-related protein RabP (rabP), found in Dictyostelium discoideum (Social amoeba).